The chain runs to 408 residues: Peptidase T (408 aa).

Histidine 81 is a Zn(2+) binding site. The active site involves aspartate 83. Aspartate 142 lines the Zn(2+) pocket. Residue glutamate 176 is the Proton acceptor of the active site. Zn(2+)-binding residues include glutamate 177, aspartate 199, and histidine 381.

This sequence belongs to the peptidase M20B family. The cofactor is Zn(2+).

It is found in the cytoplasm. It catalyses the reaction Release of the N-terminal residue from a tripeptide.. Cleaves the N-terminal amino acid of tripeptides. This is Peptidase T from Streptococcus gordonii (strain Challis / ATCC 35105 / BCRC 15272 / CH1 / DL1 / V288).